The following is a 279-amino-acid chain: 3-methyl-2-oxobutanoate hydroxymethyltransferase (279 aa).

2 residues coordinate Mg(2+): Asp-44 and Asp-83. 3-methyl-2-oxobutanoate is bound by residues 44–45, Asp-83, and Lys-113; that span reads DS. A Mg(2+)-binding site is contributed by Glu-115. The active-site Proton acceptor is Glu-182.

It belongs to the PanB family. Homodecamer; pentamer of dimers. The cofactor is Mg(2+).

Its subcellular location is the cytoplasm. The enzyme catalyses 3-methyl-2-oxobutanoate + (6R)-5,10-methylene-5,6,7,8-tetrahydrofolate + H2O = 2-dehydropantoate + (6S)-5,6,7,8-tetrahydrofolate. It participates in cofactor biosynthesis; (R)-pantothenate biosynthesis; (R)-pantoate from 3-methyl-2-oxobutanoate: step 1/2. In terms of biological role, catalyzes the reversible reaction in which hydroxymethyl group from 5,10-methylenetetrahydrofolate is transferred onto alpha-ketoisovalerate to form ketopantoate. This is 3-methyl-2-oxobutanoate hydroxymethyltransferase from Dehalococcoides mccartyi (strain ATCC BAA-2100 / JCM 16839 / KCTC 5957 / BAV1).